Reading from the N-terminus, the 82-residue chain is UPF0153 protein VC_1057 (82 aa).

It belongs to the UPF0153 family.

The sequence is that of UPF0153 protein VC_1057 from Vibrio cholerae serotype O1 (strain ATCC 39315 / El Tor Inaba N16961).